Reading from the N-terminus, the 493-residue chain is Cobyric acid synthase (493 aa).

Residues 252-443 form the GATase cobBQ-type domain; sequence DLQITVVRLP…LHGLFDNGPW (192 aa). Cysteine 333 functions as the Nucleophile in the catalytic mechanism. Histidine 435 is an active-site residue.

It belongs to the CobB/CobQ family. CobQ subfamily.

It functions in the pathway cofactor biosynthesis; adenosylcobalamin biosynthesis. Catalyzes amidations at positions B, D, E, and G on adenosylcobyrinic A,C-diamide. NH(2) groups are provided by glutamine, and one molecule of ATP is hydrogenolyzed for each amidation. This Nostoc sp. (strain PCC 7120 / SAG 25.82 / UTEX 2576) protein is Cobyric acid synthase.